We begin with the raw amino-acid sequence, 124 residues long: Small ribosomal subunit protein uS12 (124 aa).

D89 is modified (3-methylthioaspartic acid). The disordered stretch occupies residues 104–124 (TAGVKDRRQSRSKYGAKAPKE).

It belongs to the universal ribosomal protein uS12 family. As to quaternary structure, part of the 30S ribosomal subunit. Contacts proteins S8 and S17. May interact with IF1 in the 30S initiation complex.

In terms of biological role, with S4 and S5 plays an important role in translational accuracy. Its function is as follows. Interacts with and stabilizes bases of the 16S rRNA that are involved in tRNA selection in the A site and with the mRNA backbone. Located at the interface of the 30S and 50S subunits, it traverses the body of the 30S subunit contacting proteins on the other side and probably holding the rRNA structure together. The combined cluster of proteins S8, S12 and S17 appears to hold together the shoulder and platform of the 30S subunit. The sequence is that of Small ribosomal subunit protein uS12 from Synechococcus sp. (strain CC9605).